The chain runs to 218 residues: Ribonuclease T (218 aa).

The Exonuclease domain maps to 24–198; the sequence is VIIDVETAGF…YDAERTAELF (175 aa). 4 residues coordinate Mg(2+): D27, E29, H185, and D190. H185 (proton donor/acceptor) is an active-site residue.

Belongs to the RNase T family. As to quaternary structure, homodimer. Mg(2+) is required as a cofactor.

In terms of biological role, trims short 3' overhangs of a variety of RNA species, leaving a one or two nucleotide 3' overhang. Responsible for the end-turnover of tRNA: specifically removes the terminal AMP residue from uncharged tRNA (tRNA-C-C-A). Also appears to be involved in tRNA biosynthesis. This is Ribonuclease T from Histophilus somni (strain 129Pt) (Haemophilus somnus).